The following is a 568-amino-acid chain: Putative U-box domain-containing protein 55 (568 aa).

Positions 217–464 (QSESDRNDQL…KVAAEKDAAS (248 aa)) form a coiled coil. In terms of domain architecture, U-box spans 496–568 (QPPSYFICPI…AIQEWLQRNS (73 aa)).

The enzyme catalyses S-ubiquitinyl-[E2 ubiquitin-conjugating enzyme]-L-cysteine + [acceptor protein]-L-lysine = [E2 ubiquitin-conjugating enzyme]-L-cysteine + N(6)-ubiquitinyl-[acceptor protein]-L-lysine.. It participates in protein modification; protein ubiquitination. Functionally, functions as an E3 ubiquitin ligase. This chain is Putative U-box domain-containing protein 55 (PUB55), found in Arabidopsis thaliana (Mouse-ear cress).